Here is a 511-residue protein sequence, read N- to C-terminus: Lariat debranching enzyme (511 aa).

Positions 52, 54, 83, and 128 each coordinate a divalent metal cation. Residues 168 to 198 (SGIYSHGDVEFSHYERPAFAERDVKSAYHVR) are lariat recognition loop. The a divalent metal cation site is built by His226, His278, and His280. Positions 473-511 (EDDFIIDRGHGSEEPEAKKSRLEEEKKKKKKKIENLKTL) are disordered. Residues 477–498 (IIDRGHGSEEPEAKKSRLEEEK) are compositionally biased toward basic and acidic residues.

This sequence belongs to the lariat debranching enzyme family. It depends on Fe(2+) as a cofactor. Zn(2+) is required as a cofactor. Requires Mn(2+) as cofactor.

The protein resides in the nucleus. Its activity is regulated as follows. Active in presence of diverse metals including Fe(2+), Zn(2+), Mn(2+). Binds two metal cations in two adjacent alpha and beta metal-binding pockets. Functionally, cleaves the 2'-5' phosphodiester linkage at the branch point of lariat intron pre-mRNAs after splicing and converts them into linear molecules that are subsequently degraded. It thereby facilitates ribonucleotide turnover. In Caenorhabditis briggsae, this protein is Lariat debranching enzyme (dbr-1).